A 311-amino-acid polypeptide reads, in one-letter code: Exosome complex component Rrp4 (311 aa).

The S1 motif domain occupies G63–K131. A KH domain is found at R139–V197. The disordered stretch occupies residues G222–R311. Residues P241–D300 are compositionally biased toward acidic residues. Over residues A301–R311 the composition is skewed to basic and acidic residues.

The protein belongs to the RRP4 family. As to quaternary structure, component of the archaeal exosome complex. Forms a trimer of Rrp4 and/or Csl4 subunits. The trimer associates with a hexameric ring-like arrangement composed of 3 Rrp41-Rrp42 heterodimers.

The protein localises to the cytoplasm. Its function is as follows. Non-catalytic component of the exosome, which is a complex involved in RNA degradation. Increases the RNA binding and the efficiency of RNA degradation. Confers strong poly(A) specificity to the exosome. This Methanothermobacter thermautotrophicus (strain ATCC 29096 / DSM 1053 / JCM 10044 / NBRC 100330 / Delta H) (Methanobacterium thermoautotrophicum) protein is Exosome complex component Rrp4.